The chain runs to 1203 residues: Potassium/sodium hyperpolarization-activated cyclic nucleotide-gated channel 4 (1203 aa).

The tract at residues 1–182 (MDKLPPSMRK…QPASASCEQP (182 aa)) is disordered. Topologically, residues 1 to 263 (MDKLPPSMRK…IIHPYSDFRF (263 aa)) are cytoplasmic. Residues 26–36 (MDEEEDAEEEG) are compositionally biased toward acidic residues. Positions 105-117 (SRGGGSGGTGSGS) are enriched in gly residues. Over residues 121-133 (HLHDSAEERRLIA) the composition is skewed to basic and acidic residues. The residue at position 138 (S138) is a Phosphoserine. Residues 163-174 (ASPPPPQQPPQP) show a composition bias toward pro residues. The segment at 209–260 (GQAGFMQRQFGAMLQPGVNKFSLRMFGSQKAVEREQERVKSAGFWIIHPYSD) is involved in subunit assembly. Residues 264 to 286 (YWDLTMLLLMVGNLIIIPVGITF) traverse the membrane as a helical segment. Residues 287–293 (FKDENTT) lie on the Extracellular side of the membrane. The helical transmembrane segment at 294-314 (PWIVFNVVSDTFFLIDLVLNF) threads the bilayer. Over 315–336 (RTGIVVEDNTEIILDPQRIKMK) the chain is Cytoplasmic. A helical membrane pass occupies residues 337-359 (YLKSWFMVDFISSIPVDYIFLIV). The Extracellular segment spans residues 360–378 (ETRIDSEVYKTARALRIVR). Residues 379–399 (FTKILSLLRLLRLSRLIRYIH) form a helical; Voltage-sensor membrane-spanning segment. Residues 400–413 (QWEEIFHMTYDLAS) lie on the Cytoplasmic side of the membrane. Residues 414–436 (AVVRIVNLIGMMLLLCHWDGCLQ) form a helical membrane-spanning segment. At 437–464 (FLVPMLQDFPDDCWVSINNMVNNSWGKQ) the chain is on the extracellular side. N-linked (GlcNAc...) asparagine glycosylation is present at N458. The segment at residues 465–486 (YSYALFKAMSHMLCIGYGRQAP) is an intramembrane region (pore-forming). At 487-491 (VGMSD) the chain is on the extracellular side. A helical transmembrane segment spans residues 492–517 (VWLTMLSMIVGATCYAMFIGHATALI). Topologically, residues 518 to 1203 (QSLDSSRRQY…PVRSKLPSNL (686 aa)) are cytoplasmic. 3',5'-cyclic GMP is bound by residues Y559, K562, F564, and E566. 7 residues coordinate 3',5'-cyclic AMP: G659, E660, C662, R669, T670, V673, and R710. 3 disordered regions span residues 836–856 (ALGS…SSSS), 870–897 (GLSP…TPSA), and 918–1203 (LSSS…PSNL). Low complexity-rich tracts occupy residues 918–941 (LSSS…AAQP) and 966–986 (RSPS…SLGL). Pro residues predominate over residues 995–1004 (ETPPRQPEPP). Residues 1005-1028 (SLVAGASGGASPVGFTPRGGLSPP) show a composition bias toward low complexity. A compositionally biased stretch (pro residues) spans 1029–1042 (GHSPGPPRTFPSAP). Residues 1045 to 1056 (ASGSHGSLLLPP) show a composition bias toward low complexity. A phosphoserine mark is found at S1105 and S1108. Positions 1122 to 1137 (AGGGSGGSGSSGGLGP) are enriched in gly residues.

The protein belongs to the potassium channel HCN family. Homotetramer. The channel assemble into homotetramers or heteromeric complexes that contains of four pore-forming subunits. Interacts with PEX5L with a 4:4 HCN4:PEX5L stoichiometry; reduces the effects of cAMP on the voltage-dependence and rate of activation. Interacts with IRAG1; regulates HCN4 channel activity. Interacts with IRAG2; regulates HCN4 channel activity. S-palmitoylated. As to expression, highly expressed in thalamus, testis and in heart, both in ventricle and atrium. Detected at much lower levels in amygdala, substantia nigra, cerebellum and hippocampus.

Its subcellular location is the cell membrane. It carries out the reaction K(+)(in) = K(+)(out). It catalyses the reaction Na(+)(in) = Na(+)(out). Activated by cAMP and to a lesser extent by cGMP and cCMP. cAMP binding causes a conformation change that leads to the assembly of an active tetramer and channel opening. Binding of cAMP removes a tonic inhibition conferred by cyclic nucleotide-binding domain (CNBD) on channel opening. Cyclic dinucleotides can modulate HCN4 channel; cyclic dinucleotides acting as potent antagonists of cAMP. Inhibited by extracellular Cs(+) ions. Auxiliary subunits can also regulate HCN4 channel. IRAG1 causes a gain-of-function by shifting HCN4 activation to more depolarized membrane potentials in the absence of cAMP. In contrast, IRAG2 causes a loss-of-function by inhibiting cAMP-dependent potentiation of HCN4 activation. Its function is as follows. Hyperpolarization-activated ion channel that are permeable to Na(+) and K(+) ions with very slow activation and inactivation. Exhibits higher selectivity for K(+) over Na(+) ions. Contributes to the native pacemaker currents in heart (If) that regulate the rhythm of heart beat. Contributes to the native pacemaker currents in neurons (Ih). May mediate responses to sour stimuli. The protein is Potassium/sodium hyperpolarization-activated cyclic nucleotide-gated channel 4 of Homo sapiens (Human).